Consider the following 369-residue polypeptide: Trans-enoyl reductase pyiC (369 aa).

NADP(+) is bound at residue 52 to 55 (CDYK). 137–144 (TGIGTLGM) contributes to the substrate binding site. NADP(+) contacts are provided by residues 195–198 (SPKN), Tyr-213, and 260–261 (LE). 280 to 284 (GPLLL) contacts substrate. Position 349–350 (349–350 (VS)) interacts with NADP(+).

It belongs to the zinc-containing alcohol dehydrogenase family. Monomer.

Its pathway is mycotoxin biosynthesis. In terms of biological role, trans-enoyl reductase; part of the gene cluster that mediates the biosynthesis of the mycotoxin pyrichalasin H, a tyrosine-derived cytochalasan that inhibits the growth of rice seedlings, but also inhibits lymphocyte capping and actin polymerization and alters cell morphology. Pyrichalasin H is indicated as the responsible agent for the genus-specific pathogenicity of M.grisea toward crabgrass. The first step in the pathway is catalyzed by the O-methyltransferase pyiA which methylates free tyrosine to generate the precursor O-methyltyrosine. The hybrid PKS-NRPS pyiS, assisted by the enoyl reductase pyiC, are responsible for fusion of the O-methyltyrosine precursor and the polyketide backbone. The polyketide synthase module (PKS) of pyiS is responsible for the synthesis of the polyketide backbone and the downstream nonribosomal peptide synthetase (NRPS) amidates the carboxyl end of the polyketide with the O-methyltyrosine precursor. As the NRPS A-domain demonstrates substrate tolerance, pyiS can also use phenylalanine, tyrosine and even para-chlorophenylalanine as amino acid precursor, which leads to the production of novel cytochalasans, including halogenated cytochalasans. Because pyiS lacks a designated enoylreductase (ER) domain, the required activity is provided the enoyl reductase pyiC. Reduction by the hydrolyase pyiE, followed by dehydration and intra-molecular Diels-Alder cyclization by the Diels-Alderase pyiF then yield the required isoindolone-fused macrocycle. The tailoring cytochrome P450 monooxygenases piyD and piyG catalyze the hydroxylation at C-18 and C-7, respectivily, whereas the short-chain dehydrogenase/reductase pyiH reduces the carbonyl at C-21 in preparation for the transfer of an acetyl group by the acetyltransferase pyiB. These 3 reactions whose order is not clear yet, lead to the production of O-methylpyrichalasin J, a deacetylated pyrichalasin H. Finally, pyiB to converts O-methylpyrichalasin J into the final product pyrichalasin H via acetylation of C-21. The polypeptide is Trans-enoyl reductase pyiC (Pyricularia grisea (Crabgrass-specific blast fungus)).